Consider the following 376-residue polypeptide: N,N'-diacetylbacillosaminyl-diphospho-undecaprenol alpha-1,3-N-acetylgalactosaminyltransferase (376 aa).

The protein belongs to the glycosyltransferase group 1 family.

It carries out the reaction N,N'-diacetyl-alpha-D-bacillosaminyl-tri-trans,hepta-cis-undecaprenyl diphosphate + UDP-N-acetyl-alpha-D-galactosamine = N-acetyl-alpha-D-galactosaminyl-(1-&gt;3)-N,N'-diacetyl-alpha-D-bacillosaminyl-tri-trans,hepta-cis-undecaprenyl diphosphate + UDP + H(+). Its pathway is protein modification; protein glycosylation. In terms of biological role, adds the first GalNAc residue on to the isoprenoid-linked bacillosamine (2,4-diacetamido-2,4,6-trideoxyglucose) carrier in the N-linked protein glycosylation pathway. Acts first on the undecaprenylpyrophosphate-linked bacillosamine (Und-PP-Bac) substrate to yield the disaccharide. In Campylobacter jejuni subsp. jejuni serotype O:2 (strain ATCC 700819 / NCTC 11168), this protein is N,N'-diacetylbacillosaminyl-diphospho-undecaprenol alpha-1,3-N-acetylgalactosaminyltransferase (pglA).